Reading from the N-terminus, the 414-residue chain is MAILQIGAGGVGWVVAHKAAQNNDVLGDITIASRTVGKCEKIIESIQKKNNLKDSTKKLEARAVNADDVDSLVALIKEVQPDLVINAGPPWVNMSIMEACYQAKVSYLDTSVAVDLCSEGQQVPQAYDWQWGYREKFEEAGITGILGAGFDPGVVSVFAAYAVKHLFDEIDTIDVMDVNAGDHGKKFATNFDPETNMLEIQGDSFYWENGEWKQVPCHSRMLEFEFPNCGSHKVYSMAHDEVRSMQEFIPAKRIEFWMGFGDRYLNYFNVMRDIGLLSPDPLTLHDGTVVQPLHVLKALLPDPTSLAPGYTGLTCIGTWVQGKKDGKERSVFIYNNADHEVAYEDVEHQAISYTTGVPAITAALQFFRGKWADKGVFNMEQLDPDPFLETMPSIGLDWHVQELEPGQPVIHKLK.

Belongs to the saccharopine dehydrogenase family. Carboxynorspermidine synthase subfamily. As to quaternary structure, homodimer.

The enzyme catalyses carboxynorspermidine + NADP(+) + H2O = L-aspartate 4-semialdehyde + propane-1,3-diamine + NADPH + H(+). The catalysed reaction is carboxyspermidine + NADP(+) + H2O = L-aspartate 4-semialdehyde + putrescine + NADPH + H(+). Activated by dithiothreitol and inhibited by SH-reactive compounds. Functionally, involved in norspermidine biosynthesis. Catalyzes the synthesis of carboxynorspermidine from L-aspartate 4-semialdehyde and 1,3-diaminopropane. Is also slightly active with putrescine as a substrate. This is Carboxynorspermidine synthase from Vibrio alginolyticus (strain ATCC 17749 / DSM 2171 / NBRC 15630 / NCIMB 1903 / NCTC 12160 / XII-53).